A 116-amino-acid chain; its full sequence is uncharacterized protein (116 aa).

This is an uncharacterized protein from Acidianus filamentous virus 2 (isolate Italy/Pozzuoli) (AFV-2).